A 1088-amino-acid chain; its full sequence is MATHLSHPQRRPPLLRQAVKIRRRRVRDLQDPPPQATPEVQVQSHHFSPEERDLLYEEALYTVLHRLGQPEPNHVKEASELLCYLQEAFQVQPEEHQQMLQRVRELEKPIFCLKATVKQAKGILGKDVSGFSDPYCLLGIEQKVGVPEGSPVSRRRQKAVVRHTIPEEETHRTQVKTQTLNPVWDETFILEFEDITNASFHLDMWDLDTVESVRHKLGELTDLHGLRRIFKEARKDKGQDDFLGNVMLRLQDLRCREDQWFPLEPCTETYPDRGQCHLQFQFIHKRRATVASRSQPSYTVHFHLLQQLVSHEVTQHQAGGTSWGRIAESQAVTILFLHATQKDLSDFHQSMAQWLAYSRLYQSLEFPSSCLLHPITSIEYQWIQGRLKAEQREELATSFTSLLAYGLSLIRKFRSVFPLSVSDSPSRLQSLLRVLVQMCKMKAFGELCPDSAPLPQLVSEALRMGTVEWFHLMQQHHQPMVQGILEAGKALLSLVQDVMGDLYQCRRTWNKIFHNVLKIDLFTMAFLELQWLVAKRVQDHTAAVGDLVSPDVGESLFQLYVSLREFCQLGPSDSHEVLALDGFHRWFQSAIPSWLQRTYSVALERVQRAVQMDSLVPLGELTKHSTSAVDLSTCFAQISHTARQLDWPDPEEAFMITVKFVEDTCRLALVYCSLIKARARELSAVQKDQSQAADMLCVVVNNVERLRLIIDKLPTQLAWEALEQRVGAVLEQGQLQNTLHTQLQGALAGLGHEIRTGVRTLAEQLEVGIATHIQKLIDAKGSILPEDAILPLMKFLEVKLCYMNTNLVQENFSSLLTLLWTHTLTVLVEAAASHRNSSLASSRLKVALQNLEICFHAEGCGLPPEALHTDTFLALQSDLELQAASSRELIQKYFRSRIQQQAETTSERLGAVTVKASYRASEQKLHVELLSASSLLPLDSNGSSDPFVQLTLEPRHEFPELAPRETQKHKKELHPLFDETFEFLVPAEPCQKDGACLLLTVLDHDRLGADDLEGEAFLPLCRVPGLTGCVEPGEAPQMRLPLTYPAPNGDPILRLLESRKGDREAQAFVKLRRQRAKQASQHAPATEP.

The segment at 26–46 (VRDLQDPPPQATPEVQVQSHH) is disordered. In terms of domain architecture, C2 1 spans 92-239 (QPEEHQQMLQ…FKEARKDKGQ (148 aa)). Ca(2+) contacts are provided by Asp-127 and Asp-133. Position 150 is a phosphoserine (Ser-150). Asp-206 and Asp-208 together coordinate Ca(2+). Residues 240 to 543 (DDFLGNVMLR…AKRVQDHTAA (304 aa)) are interaction with RAB27A. The MHD1 domain maps to 557–675 (FQLYVSLREF…RLALVYCSLI (119 aa)). In terms of domain architecture, MHD2 spans 786–893 (EDAILPLMKF…ASSRELIQKY (108 aa)). One can recognise a C2 2 domain in the interval 908–1033 (RLGAVTVKAS…PGLTGCVEPG (126 aa)). 6 residues coordinate Ca(2+): Leu-938, Asp-939, Asp-945, Asp-1003, Asp-1005, and Asp-1011.

The protein belongs to the unc-13 family. In terms of assembly, interacts with RAB27A and DOC2A. Interacts with RhoG; the interaction increases RhoG affinity to the membrane lipids, targets Unc13d to membrane lipids and facilitates cytotoxic granule (CG) docking to the plasma membrane. Ca(2+) is required as a cofactor. Expressed in lung bronchial epithelium goblet/mucous cells. Also expressed in spleen and testis. Expressed at very low levels in heart muscle, kidney, liver, brain and skeletal muscle.

It localises to the cytoplasm. The protein localises to the membrane. Its subcellular location is the late endosome. It is found in the recycling endosome. The protein resides in the lysosome. Functionally, plays a role in cytotoxic granule exocytosis in lymphocytes. Required for both granule maturation and granule docking and priming at the immunologic synapse. Regulates assembly of recycling and late endosomal structures, leading to the formation of an endosomal exocytic compartment that fuses with perforin-containing granules at the immunologic synapse and licences them for exocytosis. Regulates Ca(2+)-dependent secretory lysosome exocytosis in mast cells. This is Protein unc-13 homolog D (Unc13d) from Rattus norvegicus (Rat).